The following is a 329-amino-acid chain: Malate dehydrogenase (329 aa).

13-19 is an NAD(+) binding site; it reads GAAGNIS. Residues Arg-94 and Arg-100 each coordinate substrate. NAD(+) is bound by residues Asn-107, Gln-114, and 131-133; that span reads VGN. Residues Asn-133 and Arg-164 each coordinate substrate. Residue His-189 is the Proton acceptor of the active site.

Belongs to the LDH/MDH superfamily. MDH type 2 family.

The enzyme catalyses (S)-malate + NAD(+) = oxaloacetate + NADH + H(+). Catalyzes the reversible oxidation of malate to oxaloacetate. This is Malate dehydrogenase from Psychrobacter cryohalolentis (strain ATCC BAA-1226 / DSM 17306 / VKM B-2378 / K5).